The following is a 98-amino-acid chain: Co-chaperonin GroES (98 aa).

Belongs to the GroES chaperonin family. In terms of assembly, heptamer of 7 subunits arranged in a ring. Interacts with the chaperonin GroEL.

Its subcellular location is the cytoplasm. Its function is as follows. Together with the chaperonin GroEL, plays an essential role in assisting protein folding. The GroEL-GroES system forms a nano-cage that allows encapsulation of the non-native substrate proteins and provides a physical environment optimized to promote and accelerate protein folding. GroES binds to the apical surface of the GroEL ring, thereby capping the opening of the GroEL channel. The protein is Co-chaperonin GroES of Agrobacterium fabrum (strain C58 / ATCC 33970) (Agrobacterium tumefaciens (strain C58)).